The chain runs to 71 residues: UPF0346 protein SUB0487 (71 aa).

It belongs to the UPF0346 family.

The polypeptide is UPF0346 protein SUB0487 (Streptococcus uberis (strain ATCC BAA-854 / 0140J)).